The primary structure comprises 347 residues: Aurora kinase A- and ninein-interacting protein (347 aa).

Positions Gln-182–His-347 are interaction with AURKA. The interval Arg-273–His-347 is interaction with RBBP8/CtIP. Position 284 is a phosphoserine (Ser-284). Polar residues predominate over residues Val-301–Asp-322. Positions Val-301–Thr-325 are disordered.

Belongs to the AUNIP family. As to quaternary structure, interacts (via C-terminus) with AURKA (via C-terminus). Interacts (via N-terminus) with NIN; this interaction blocks NIN phosphorylation by both AURKA and GSK3B. Identified in a complex with NIN and AURKA. Interacts with RBBP8/CtIP.

It is found in the nucleus. The protein localises to the chromosome. It localises to the cytoplasm. The protein resides in the cytoskeleton. Its subcellular location is the microtubule organizing center. It is found in the centrosome. The protein localises to the spindle pole. Its function is as follows. DNA-binding protein that accumulates at DNA double-strand breaks (DSBs) following DNA damage and promotes DNA resection and homologous recombination. Serves as a sensor of DNA damage: binds DNA with a strong preference for DNA substrates that mimic structures generated at stalled replication forks, and anchors RBBP8/CtIP to DSB sites to promote DNA end resection and ensuing homologous recombination repair. Inhibits non-homologous end joining (NHEJ). Required for the dynamic movement of AURKA at the centrosomes and spindle apparatus during the cell cycle. The sequence is that of Aurora kinase A- and ninein-interacting protein from Rattus norvegicus (Rat).